A 216-amino-acid polypeptide reads, in one-letter code: Uracil phosphoribosyltransferase (216 aa).

CTP-binding positions include 29–30 (RK) and Arg-37. 30–34 (KNLVR) contributes to the GTP binding site. A 5-phospho-alpha-D-ribose 1-diphosphate-binding site is contributed by Arg-80. A CTP-binding site is contributed by 87-96 (EGLLKAFPKA). Residues Arg-105 and 140–148 (DPMIATAST) each bind 5-phospho-alpha-D-ribose 1-diphosphate. Uracil is bound by residues Ile-203 and 208–210 (GDA). Asp-209 contributes to the 5-phospho-alpha-D-ribose 1-diphosphate binding site.

It belongs to the UPRTase family. As to quaternary structure, homotetramer. Mg(2+) serves as cofactor.

It carries out the reaction UMP + diphosphate = 5-phospho-alpha-D-ribose 1-diphosphate + uracil. It participates in pyrimidine metabolism; UMP biosynthesis via salvage pathway; UMP from uracil: step 1/1. Allosterically activated by GTP. Inhibited by CTP and UMP in combination. Functionally, catalyzes the conversion of uracil and 5-phospho-alpha-D-ribose 1-diphosphate (PRPP) to UMP and diphosphate. This is Uracil phosphoribosyltransferase (upp) from Saccharolobus solfataricus (strain ATCC 35092 / DSM 1617 / JCM 11322 / P2) (Sulfolobus solfataricus).